Here is a 228-residue protein sequence, read N- to C-terminus: 7-cyano-7-deazaguanine synthase (228 aa).

8-18 is a binding site for ATP; that stretch reads LSGGLDSTTCL. Zn(2+) is bound by residues Cys-188, Cys-198, Cys-201, and Cys-204.

It belongs to the QueC family. Requires Zn(2+) as cofactor.

It carries out the reaction 7-carboxy-7-deazaguanine + NH4(+) + ATP = 7-cyano-7-deazaguanine + ADP + phosphate + H2O + H(+). It participates in purine metabolism; 7-cyano-7-deazaguanine biosynthesis. Functionally, catalyzes the ATP-dependent conversion of 7-carboxy-7-deazaguanine (CDG) to 7-cyano-7-deazaguanine (preQ(0)). This chain is 7-cyano-7-deazaguanine synthase, found in Legionella pneumophila (strain Corby).